The chain runs to 1369 residues: Microtubule-associated tumor suppressor candidate 2 (1369 aa).

7 disordered regions span residues 180 to 262, 374 to 442, 477 to 509, 582 to 627, 791 to 839, 861 to 992, and 1331 to 1369; these read ASSS…TQTV, GRGN…FIPN, GENKTEVPEPLDPQSGRSEARESKEVTTSVAEN, NTSP…EERT, RSSA…LRPP, SSVS…QARE, and WKLQTGDPTSPIKLSPTSPVYRGSSSGPSSPARVSTTPR. 2 stretches are compositionally biased toward polar residues: residues 246–262 and 392–401; these read PSTSESKQSTPSETQTV and LHTTPKQGSA. A mediates interaction with MAPRE1 region spans residues 641–980; it reads RPKIITYIRR…PKQRTAAARN (340 aa). A sufficient for interaction with KIF2C region spans residues 801-890; sequence GPITTATSLY…TRSTFGNEEQ (90 aa). Positions 801 to 1150 are localization to the growing distal tip of microtubules; sequence GPITTATSLY…HDAALLEMEN (350 aa). Residues 804–814 show a composition bias toward polar residues; the sequence is TTATSLYSSDP. A compositionally biased stretch (low complexity) spans 821-834; it reads ASSSNAAKSNLPKS. Basic and acidic residues predominate over residues 937–947; it reads TKKDAQKDQDT. Residues 991-1335 are a coiled coil; the sequence is REAERQLVLR…NEELLWKLQT (345 aa). Low complexity predominate over residues 1348 to 1369; it reads SPVYRGSSSGPSSPARVSTTPR.

It in the C-terminal section; belongs to the MTUS1 family. Homodimer. Interacts with KIF2C and MAPRE1; the interaction is direct and probably targets MTUS2 and KIF2C to microtubules. Detected in embryonic stem cells differentiating to cardiomyocytes.

Its subcellular location is the cytoplasm. The protein resides in the cytoskeleton. Its function is as follows. Binds microtubules. Together with MAPRE1 may target the microtubule depolymerase KIF2C to the plus-end of microtubules. May regulate the dynamics of microtubules at their growing distal tip. The protein is Microtubule-associated tumor suppressor candidate 2 (MTUS2) of Homo sapiens (Human).